The sequence spans 658 residues: ATP-dependent DNA helicase Rep (658 aa).

In terms of domain architecture, UvrD-like helicase ATP-binding spans 1–280 (MSLNFNQKNA…IKMEQNYRSY (280 aa)). ATP-binding positions include 22 to 29 (AGAGSGKT) and R278. Residues 281-564 (GRILKAANKL…QLMTLHSSKG (284 aa)) form the UvrD-like helicase C-terminal domain.

The protein belongs to the helicase family. UvrD subfamily. In terms of assembly, homodimer.

The enzyme catalyses Couples ATP hydrolysis with the unwinding of duplex DNA by translocating in the 3'-5' direction.. The catalysed reaction is ATP + H2O = ADP + phosphate + H(+). In terms of biological role, rep helicase is a single-stranded DNA-dependent ATPase involved in DNA replication; it can initiate unwinding at a nick in the DNA. It binds to the single-stranded DNA and acts in a progressive fashion along the DNA in the 3' to 5' direction. In Buchnera aphidicola subsp. Schizaphis graminum (strain Sg), this protein is ATP-dependent DNA helicase Rep.